A 402-amino-acid polypeptide reads, in one-letter code: Coiled-coil domain-containing protein 188 (402 aa).

3 disordered regions span residues 1–30, 50–74, and 108–131; these read MEGL…GGGL, HSVQ…EGEA, and HPGS…PCPC. Positions 154-189 form a coiled coil; that stretch reads GLLGSAEQSFLQLEQENHSLKRQNQELREQLGALLG. Residues 347 to 363 traverse the membrane as a helical segment; the sequence is LLLGALLVWTAAYVYVV.

It localises to the membrane. This is Coiled-coil domain-containing protein 188 from Homo sapiens (Human).